The chain runs to 306 residues: Non-specific ribonucleoside hydrolase RihC (306 aa).

His-235 is a catalytic residue.

It belongs to the IUNH family. RihC subfamily.

Hydrolyzes both purine and pyrimidine ribonucleosides with a broad-substrate specificity. The protein is Non-specific ribonucleoside hydrolase RihC of Salmonella schwarzengrund (strain CVM19633).